The following is a 143-amino-acid chain: Spliceosomal protein DIB1 (143 aa).

The protein belongs to the DIM1 family. As to quaternary structure, component of the 25S [U4/U6.U5] tri-snRNP.

The protein resides in the nucleus. Functionally, essential role in pre-mRNA splicing. Also essential for entry into mitosis (G2/M progression) as well as for chromosome segregation during mitosis. The chain is Spliceosomal protein DIB1 (DIB1) from Eremothecium gossypii (strain ATCC 10895 / CBS 109.51 / FGSC 9923 / NRRL Y-1056) (Yeast).